The primary structure comprises 571 residues: Penton protein (571 aa).

The interval 297 to 325 is disordered; the sequence is KDDTEQGGGGAGGSNSSGSGAEENSNAAA. Gly residues predominate over residues 302–311; sequence QGGGGAGGSN. Low complexity predominate over residues 312–325; that stretch reads SSGSGAEENSNAAA. A Cell attachment site motif is present at residues 340–342; it reads RGD. The tract at residues 347–383 is disordered; it reads RAEEKRAEAEAAAEAAAPAAQPEVEKPQKKPVIKPLT. Over residues 356-368 the composition is skewed to low complexity; the sequence is EAAAEAAAPAAQP.

This sequence belongs to the adenoviridae penton family. In terms of assembly, interacts (via the cell attachment site RGD) with host heterodimer ITGAV-ITGB5; this interaction promotes virus internalization. Interacts with host WWP1 and WWP2. Interacts with the fiber protein (via N-terminal tail region). Interacts with the capsid vertex protein; this interaction binds the penton base to neighboring peripentonal hexons.

The protein localises to the virion. It is found in the host nucleus. Functionally, major capsid protein that self-associates to form penton base pentamers, each in the shape of a pentagon, situated at the 12 vertices of the pseudo T=25 capsid. Involved in virus secondary attachment to host cell after initial attachment by the fiber protein. Binds host integrin heterodimer ITGAV-ITGB5 (alphaV-beta5) thereby triggering clathrin-mediated endocytosis of virions. Mediates initial virus attachment to CXADR-negative cells. Binding to integrins ITGAV-ITGB5 also seems to induce macropinocytosis uptake of the virus. As the virus enters the host cell, penton proteins are shed concomitant with virion acidification in the endosome. In Homo sapiens (Human), this protein is Penton protein.